The primary structure comprises 213 residues: Orotate phosphoribosyltransferase (213 aa).

Residue Lys26 participates in 5-phospho-alpha-D-ribose 1-diphosphate binding. Residue 34 to 35 (FF) coordinates orotate. 5-phospho-alpha-D-ribose 1-diphosphate is bound by residues 72 to 73 (YK), Arg99, Lys100, Lys103, His105, and 124 to 132 (DDVITAGTA). Orotate is bound by residues Thr128 and Arg156.

This sequence belongs to the purine/pyrimidine phosphoribosyltransferase family. PyrE subfamily. As to quaternary structure, homodimer. It depends on Mg(2+) as a cofactor.

The enzyme catalyses orotidine 5'-phosphate + diphosphate = orotate + 5-phospho-alpha-D-ribose 1-diphosphate. Its pathway is pyrimidine metabolism; UMP biosynthesis via de novo pathway; UMP from orotate: step 1/2. Catalyzes the transfer of a ribosyl phosphate group from 5-phosphoribose 1-diphosphate to orotate, leading to the formation of orotidine monophosphate (OMP). This Haemophilus influenzae (strain ATCC 51907 / DSM 11121 / KW20 / Rd) protein is Orotate phosphoribosyltransferase.